The chain runs to 145 residues: MKTQDRSGSGPSQRMLRVGELVRHALADALQRGDHLDPALAGTIITVPEVRMSPDLKIATCFVMPLGGKDVNTVIKLLAANQKLLRTEVARRVELKSVPSLRFLRDTSFDEGARIDALLRRPDVARDLDTETDAEAGSETTKEED.

Residues 126-145 form a disordered region; the sequence is RDLDTETDAEAGSETTKEED. The segment covering 130 to 145 has biased composition (acidic residues); the sequence is TETDAEAGSETTKEED.

The protein belongs to the RbfA family. In terms of assembly, monomer. Binds 30S ribosomal subunits, but not 50S ribosomal subunits or 70S ribosomes.

Its subcellular location is the cytoplasm. Functionally, one of several proteins that assist in the late maturation steps of the functional core of the 30S ribosomal subunit. Associates with free 30S ribosomal subunits (but not with 30S subunits that are part of 70S ribosomes or polysomes). Required for efficient processing of 16S rRNA. May interact with the 5'-terminal helix region of 16S rRNA. The protein is Ribosome-binding factor A of Azorhizobium caulinodans (strain ATCC 43989 / DSM 5975 / JCM 20966 / LMG 6465 / NBRC 14845 / NCIMB 13405 / ORS 571).